Here is a 200-residue protein sequence, read N- to C-terminus: Small ribosomal subunit protein uS4 (200 aa).

The tract at residues 22–41 (TGKELQKRPYAPGQHGPNQR) is disordered. The S4 RNA-binding domain occupies 92 to 152 (SRLDNLVYRM…EKSRNLQVIK (61 aa)).

Belongs to the universal ribosomal protein uS4 family. As to quaternary structure, part of the 30S ribosomal subunit. Contacts protein S5. The interaction surface between S4 and S5 is involved in control of translational fidelity.

In terms of biological role, one of the primary rRNA binding proteins, it binds directly to 16S rRNA where it nucleates assembly of the body of the 30S subunit. With S5 and S12 plays an important role in translational accuracy. In Halalkalibacterium halodurans (strain ATCC BAA-125 / DSM 18197 / FERM 7344 / JCM 9153 / C-125) (Bacillus halodurans), this protein is Small ribosomal subunit protein uS4.